The primary structure comprises 180 residues: NAD(P)H-quinone oxidoreductase subunit I, chloroplastic (180 aa).

2 4Fe-4S ferredoxin-type domains span residues 55-84 (GRIH…VDWR) and 95-124 (LNYS…MTEE). [4Fe-4S] cluster is bound by residues C64, C67, C70, C74, C104, C107, C110, and C114.

Belongs to the complex I 23 kDa subunit family. NDH is composed of at least 16 different subunits, 5 of which are encoded in the nucleus. It depends on [4Fe-4S] cluster as a cofactor.

The protein resides in the plastid. Its subcellular location is the chloroplast thylakoid membrane. It carries out the reaction a plastoquinone + NADH + (n+1) H(+)(in) = a plastoquinol + NAD(+) + n H(+)(out). It catalyses the reaction a plastoquinone + NADPH + (n+1) H(+)(in) = a plastoquinol + NADP(+) + n H(+)(out). Functionally, NDH shuttles electrons from NAD(P)H:plastoquinone, via FMN and iron-sulfur (Fe-S) centers, to quinones in the photosynthetic chain and possibly in a chloroplast respiratory chain. The immediate electron acceptor for the enzyme in this species is believed to be plastoquinone. Couples the redox reaction to proton translocation, and thus conserves the redox energy in a proton gradient. This chain is NAD(P)H-quinone oxidoreductase subunit I, chloroplastic, found in Dioscorea elephantipes (Elephant's foot yam).